Here is an 83-residue protein sequence, read N- to C-terminus: Putative snRNP Sm-like protein (83 aa).

One can recognise a Sm domain in the interval 9 to 81; the sequence is KPMDVLKNAL…VIFVSPSKGD (73 aa).

The protein belongs to the snRNP Sm proteins family.

The sequence is that of Putative snRNP Sm-like protein from Thermoplasma volcanium (strain ATCC 51530 / DSM 4299 / JCM 9571 / NBRC 15438 / GSS1).